A 247-amino-acid polypeptide reads, in one-letter code: Uroporphyrinogen-III C-methyltransferase (247 aa).

Residues Pro-12, 117 to 118 (TA), Met-168, Ala-197, and Ala-225 each bind S-adenosyl-L-homocysteine.

Belongs to the precorrin methyltransferase family.

It catalyses the reaction uroporphyrinogen III + 2 S-adenosyl-L-methionine = precorrin-2 + 2 S-adenosyl-L-homocysteine + H(+). Its pathway is cofactor biosynthesis; adenosylcobalamin biosynthesis; precorrin-2 from uroporphyrinogen III: step 1/1. The protein operates within porphyrin-containing compound metabolism; siroheme biosynthesis; precorrin-2 from uroporphyrinogen III: step 1/1. Catalyzes the two successive C-2 and C-7 methylation reactions involved in the conversion of uroporphyrinogen III to precorrin-2 via the intermediate formation of precorrin-1. It is a step in the biosynthesis of both cobalamin (vitamin B12) and siroheme. The protein is Uroporphyrinogen-III C-methyltransferase of Pseudomonas fluorescens.